Reading from the N-terminus, the 249-residue chain is Triosephosphate isomerase (249 aa).

9–11 (NWK) contacts substrate. The Electrophile role is filled by H95. The Proton acceptor role is filled by E167. Substrate contacts are provided by residues G173, S213, and 234-235 (GG).

This sequence belongs to the triosephosphate isomerase family. As to quaternary structure, homodimer.

Its subcellular location is the cytoplasm. It carries out the reaction D-glyceraldehyde 3-phosphate = dihydroxyacetone phosphate. It participates in carbohydrate biosynthesis; gluconeogenesis. The protein operates within carbohydrate degradation; glycolysis; D-glyceraldehyde 3-phosphate from glycerone phosphate: step 1/1. In terms of biological role, involved in the gluconeogenesis. Catalyzes stereospecifically the conversion of dihydroxyacetone phosphate (DHAP) to D-glyceraldehyde-3-phosphate (G3P). The protein is Triosephosphate isomerase of Dictyoglomus thermophilum (strain ATCC 35947 / DSM 3960 / H-6-12).